The chain runs to 135 residues: Mini-ribonuclease 3 (135 aa).

D19 is a catalytic residue.

This sequence belongs to the MrnC RNase family. As to quaternary structure, homodimer. It depends on Mg(2+) as a cofactor.

The protein localises to the cytoplasm. In terms of biological role, involved in correct processing of both the 5' and 3' ends of 23S rRNA precursor. Processes 30S rRNA precursor transcript even in absence of ribonuclease 3 (Rnc); Rnc processes 30S rRNA into smaller rRNA precursors. The sequence is that of Mini-ribonuclease 3 from Gloeobacter violaceus (strain ATCC 29082 / PCC 7421).